We begin with the raw amino-acid sequence, 772 residues long: Polyribonucleotide nucleotidyltransferase (772 aa).

Aspartate 486 and aspartate 492 together coordinate Mg(2+). One can recognise a KH domain in the interval 553 to 612; the sequence is PRIETLQIDKSKIRDVIGTGGKVIREIVATTGAKVDIDDEGLIKISSSDLTQIEAAKNWI. The region spanning 622–690 is the S1 motif domain; that stretch reads GKIYKGKVVN…QRGKVRLSMR (69 aa). The tract at residues 695–772 is disordered; the sequence is ETGAELEDTR…HMPAFLKSDD (78 aa). A compositionally biased stretch (basic and acidic residues) spans 701 to 760; it reads EDTRPPREPREPRGDRGDRGDRGDRRGPRGDRGPRREGGDRGPRREGGDRPRRDRDDGPA.

The protein belongs to the polyribonucleotide nucleotidyltransferase family. The cofactor is Mg(2+).

The protein localises to the cytoplasm. The catalysed reaction is RNA(n+1) + phosphate = RNA(n) + a ribonucleoside 5'-diphosphate. In terms of biological role, involved in mRNA degradation. Catalyzes the phosphorolysis of single-stranded polyribonucleotides processively in the 3'- to 5'-direction. The sequence is that of Polyribonucleotide nucleotidyltransferase from Novosphingobium aromaticivorans (strain ATCC 700278 / DSM 12444 / CCUG 56034 / CIP 105152 / NBRC 16084 / F199).